A 306-amino-acid polypeptide reads, in one-letter code: Phospho-N-acetylmuramoyl-pentapeptide-transferase (306 aa).

10 helical membrane-spanning segments follow: residues 2-22 (IALL…LKYW), 47-67 (SGTP…FLFF), 71-91 (FFIS…DLKL), 105-125 (IFLS…DYKI), 131-151 (LIID…IAVP), 162-182 (GLAG…SFHF), 185-205 (IALE…FNSH), 209-229 (IFMG…LSVV), 236-256 (LIFL…QVFF), and 284-304 (IVWR…VLWY).

Belongs to the glycosyltransferase 4 family. MraY subfamily. Mg(2+) is required as a cofactor.

The protein localises to the cell inner membrane. It carries out the reaction UDP-N-acetyl-alpha-D-muramoyl-L-alanyl-gamma-D-glutamyl-meso-2,6-diaminopimeloyl-D-alanyl-D-alanine + di-trans,octa-cis-undecaprenyl phosphate = di-trans,octa-cis-undecaprenyl diphospho-N-acetyl-alpha-D-muramoyl-L-alanyl-D-glutamyl-meso-2,6-diaminopimeloyl-D-alanyl-D-alanine + UMP. It functions in the pathway cell wall biogenesis; peptidoglycan biosynthesis. Catalyzes the initial step of the lipid cycle reactions in the biosynthesis of the cell wall peptidoglycan: transfers peptidoglycan precursor phospho-MurNAc-pentapeptide from UDP-MurNAc-pentapeptide onto the lipid carrier undecaprenyl phosphate, yielding undecaprenyl-pyrophosphoryl-MurNAc-pentapeptide, known as lipid I. The protein is Phospho-N-acetylmuramoyl-pentapeptide-transferase of Dictyoglomus thermophilum (strain ATCC 35947 / DSM 3960 / H-6-12).